The sequence spans 208 residues: Protein TIC 20-II, chloroplastic (208 aa).

A chloroplast-targeting transit peptide spans 1–49; the sequence is MASLCLSLHQTLTNPLSAPRCRPLSLSFPGSSTFSIRPSSRRATALTTR. Helical transmembrane passes span 61–83, 101–121, 134–154, and 172–192; these read VISIASYALPFFNSLQYGRFLFA, LYRSVPYASFVAFFGLYLGVV, AMQAVTLDVLLAVPVLLTRIL, and TGVFVFSFMCFVYGVVSSLLG.

Belongs to the Tic20 family. Part of the Tic complex. Expressed in leaves, siliques and roots.

Its subcellular location is the plastid. The protein resides in the chloroplast inner membrane. Functionally, may be involved in protein precursor import into chloroplasts. Not redundant with TIC20-I, TIC20-IV or TIC20-V. The polypeptide is Protein TIC 20-II, chloroplastic (TIC20-II) (Arabidopsis thaliana (Mouse-ear cress)).